The chain runs to 1675 residues: Coadhesin (1675 aa).

Residues 1-1356 lie on the Extracellular side of the membrane; that stretch reads QGNYYSYGGT…TIADQADAAK (1356 aa). Residues 11–160 form the F5/8 type C 1 domain; it reads TPGTPIGCTN…ICMRVGVESC (150 aa). TSP type-1 domains lie at 168 to 220, 224 to 279, 281 to 336, 338 to 393, 403 to 458, 460 to 515, and 517 to 572; these read NGAW…NDCV, NGGW…QFCP, DGGW…QCCP, HGGW…QTCP, NGNY…IPCP, NGNW…TACP, and DGGW…GPCP. Intrachain disulfides connect Cys-180-Cys-216, Cys-184-Cys-219, Cys-194-Cys-206, Cys-236-Cys-273, Cys-240-Cys-278, Cys-251-Cys-263, Cys-293-Cys-330, Cys-297-Cys-335, Cys-308-Cys-320, Cys-350-Cys-387, Cys-354-Cys-392, Cys-365-Cys-377, Cys-415-Cys-452, Cys-419-Cys-457, Cys-430-Cys-442, Cys-472-Cys-509, Cys-476-Cys-514, Cys-487-Cys-499, Cys-528-Cys-566, Cys-532-Cys-571, and Cys-543-Cys-555. Residues 567-588 form a disordered region; the sequence is NKGPCPTSPPTISPPTTGSPAD. VWFA domains are found at residues 595-769, 778-958, and 966-1141; these read DLVF…MDRI, DIGF…FKAL, and DLTF…ISII. Positions 1144-1198 constitute a TSP type-1 8 domain; sequence PSGLSKWSSWSACSKTCRYLGKAGTQIRTRDCKIPELGCDGMRIDTVECNKMDCE. 3 cysteine pairs are disulfide-bonded: Cys-1156/Cys-1192, Cys-1160/Cys-1197, and Cys-1175/Cys-1182. Residues 1192–1336 form the F5/8 type C 2 domain; sequence CNKMDCEGCG…PCMQAAVFGC (145 aa). A helical membrane pass occupies residues 1357–1377; the sequence is GILIVLWILAGILTFLLLMAC. Residues 1378-1675 lie on the Cytoplasmic side of the membrane; the sequence is CYYCCWHVCC…RGEEWYSRWG (298 aa). The span at 1463–1480 shows a compositional bias: basic and acidic residues; the sequence is EKHVTAEDVKSEKPKYSE. The interval 1463 to 1491 is disordered; that stretch reads EKHVTAEDVKSEKPKYSEEASSGTIKSGS. Residues 1481 to 1491 are compositionally biased toward polar residues; it reads EASSGTIKSGS.

In terms of tissue distribution, component of the acid-insoluble and acid-soluble organic matrix of the aragonitic skeleton (at protein level).

The protein resides in the membrane. The chain is Coadhesin from Acropora millepora (Staghorn coral).